Here is a 424-residue protein sequence, read N- to C-terminus: Probable carboxypeptidase AN5749 (424 aa).

A signal peptide spans 1–17 (MNLSILAALALVSFSTA). N-linked (GlcNAc...) asparagine glycosylation occurs at Asn-58. Zn(2+) is bound at residue Asp-139. Residue Glu-171 is the Proton acceptor of the active site. Glu-172 is a Zn(2+) binding site. N-linked (GlcNAc...) asparagine glycans are attached at residues Asn-184 and Asn-323.

Belongs to the peptidase M20A family. Zn(2+) is required as a cofactor.

It localises to the secreted. The sequence is that of Probable carboxypeptidase AN5749 from Emericella nidulans (strain FGSC A4 / ATCC 38163 / CBS 112.46 / NRRL 194 / M139) (Aspergillus nidulans).